A 145-amino-acid chain; its full sequence is 3-dehydroquinate dehydratase (145 aa).

Tyr24 acts as the Proton acceptor in catalysis. Asn75, His81, and Asp88 together coordinate substrate. His101 serves as the catalytic Proton donor. Substrate-binding positions include 102 to 103 (IS) and Arg112.

It belongs to the type-II 3-dehydroquinase family. Homododecamer.

It carries out the reaction 3-dehydroquinate = 3-dehydroshikimate + H2O. Its pathway is metabolic intermediate biosynthesis; chorismate biosynthesis; chorismate from D-erythrose 4-phosphate and phosphoenolpyruvate: step 3/7. Functionally, catalyzes a trans-dehydration via an enolate intermediate. This chain is 3-dehydroquinate dehydratase, found in Rhizobium johnstonii (strain DSM 114642 / LMG 32736 / 3841) (Rhizobium leguminosarum bv. viciae).